The following is a 565-amino-acid chain: MEPKTKKQRSLYIPYAGPVLLEFPLLNKGSAFSMEERRNFNLLGLLPEVVETIEEQAERAWIQYQGFKTEIDKHIYLRNIQDTNETLFYRLVNNHLDEMMPVIYTPTVGAACERFSEIYRRSRGVFISYQNRHNMDDILQNVPNHNIKVIVVTDGERILGLGDQGIGGMGIPIGKLSLYTACGGISPAYTLPVVLDVGTNNQQLLNDPLYMGWRNPRITDDEYYEFVDEFIQAVKQRWPDVLLQFEDFAQKNAMPLLNRYRNEICSFNDDIQGTAAVTVGTLIAASRAAGGQLSEKKIVFLGAGSAGCGIAEMIIAQTQREGLSEEAARQKVFMVDRFGLLTDKMPNLLPFQTKLVQKRENLSDWDTDSDVLSLLDVVRNVKPDILIGVSGQTGLFTEEIIREMHKHCPRPIVMPLSNPTSRVEATPQDIIAWTEGNALVATGSPFNPVVWKDKIYPIAQCNNAFIFPGIGLGVIASGASRITDEMLMSASEMLAQYSPLVLNGEGLVLPELKDIQKVSRAIAFAVGKMAQQQGVAVKTSAEALQQAIDDNFWHAEYRDYRRTSI.

The active-site Proton donor is the Y104. R157 contributes to the NAD(+) binding site. K175 acts as the Proton acceptor in catalysis. 3 residues coordinate a divalent metal cation: E246, D247, and D270. Residues D270 and N418 each coordinate NAD(+).

The protein belongs to the malic enzymes family. As to quaternary structure, homotetramer. Mg(2+) serves as cofactor. Mn(2+) is required as a cofactor.

The enzyme catalyses (S)-malate + NAD(+) = pyruvate + CO2 + NADH. It carries out the reaction oxaloacetate + H(+) = pyruvate + CO2. The polypeptide is NAD-dependent malic enzyme (Escherichia coli O6:H1 (strain CFT073 / ATCC 700928 / UPEC)).